Here is a 601-residue protein sequence, read N- to C-terminus: Sulfite reductase [NADPH] flavoprotein alpha-component (601 aa).

In terms of domain architecture, Flavodoxin-like spans 64 to 202 (ITLISASQTG…SAQQWRQQIV (139 aa)). Residues 70-75 (SQTGNA), 117-120 (STQG), and 153-162 (LGDTSYEHFC) contribute to the FMN site. The 215-residue stretch at 236 to 450 (AAPLTAQLSV…IEHNDNFRLP (215 aa)) folds into the FAD-binding FR-type domain. FAD-binding positions include T324, K358, 388–391 (RLYS), 406–408 (TVG), Y412, and 421–424 (GGAS). NADP(+) contacts are provided by residues 521 to 522 (SR), 527 to 531 (KIYVQ), and D563. Residue Y601 coordinates FAD.

Belongs to the NADPH-dependent sulphite reductase flavoprotein subunit CysJ family. The protein in the N-terminal section; belongs to the flavodoxin family. It in the C-terminal section; belongs to the flavoprotein pyridine nucleotide cytochrome reductase family. As to quaternary structure, alpha(8)-beta(8). The alpha component is a flavoprotein, the beta component is a hemoprotein. FAD is required as a cofactor. Requires FMN as cofactor.

The catalysed reaction is hydrogen sulfide + 3 NADP(+) + 3 H2O = sulfite + 3 NADPH + 4 H(+). It participates in sulfur metabolism; hydrogen sulfide biosynthesis; hydrogen sulfide from sulfite (NADPH route): step 1/1. Functionally, component of the sulfite reductase complex that catalyzes the 6-electron reduction of sulfite to sulfide. This is one of several activities required for the biosynthesis of L-cysteine from sulfate. The flavoprotein component catalyzes the electron flow from NADPH -&gt; FAD -&gt; FMN to the hemoprotein component. The chain is Sulfite reductase [NADPH] flavoprotein alpha-component from Yersinia enterocolitica serotype O:8 / biotype 1B (strain NCTC 13174 / 8081).